Here is a 611-residue protein sequence, read N- to C-terminus: Chaperone protein DnaK (611 aa).

Residue Thr-173 is modified to Phosphothreonine; by autocatalysis. Residues 579–592 are compositionally biased toward low complexity; the sequence is AAGQAEGAQGAQDA. The segment at 579 to 598 is disordered; it reads AAGQAEGAQGAQDAGAKKDN.

It belongs to the heat shock protein 70 family.

Acts as a chaperone. The sequence is that of Chaperone protein DnaK from Bacillus cereus (strain B4264).